A 188-amino-acid polypeptide reads, in one-letter code: Protein GrpE 2 (188 aa).

Over residues 1-29 the composition is skewed to basic and acidic residues; sequence MDNQEKKTNYQNTDKENDLEKNKEKKNDE. The disordered stretch occupies residues 1–33; sequence MDNQEKKTNYQNTDKENDLEKNKEKKNDESIFQ.

Belongs to the GrpE family. Homodimer.

Its subcellular location is the cytoplasm. Participates actively in the response to hyperosmotic and heat shock by preventing the aggregation of stress-denatured proteins, in association with DnaK and GrpE. It is the nucleotide exchange factor for DnaK and may function as a thermosensor. Unfolded proteins bind initially to DnaJ; upon interaction with the DnaJ-bound protein, DnaK hydrolyzes its bound ATP, resulting in the formation of a stable complex. GrpE releases ADP from DnaK; ATP binding to DnaK triggers the release of the substrate protein, thus completing the reaction cycle. Several rounds of ATP-dependent interactions between DnaJ, DnaK and GrpE are required for fully efficient folding. This chain is Protein GrpE 2, found in Buchnera aphidicola subsp. Schizaphis graminum (strain Sg).